Here is a 484-residue protein sequence, read N- to C-terminus: Transmembrane protein 161B (484 aa).

Residues 108–128 form a helical membrane-spanning segment; that stretch reads LVDFTVAATVVYLITELYFCV. Residue Asn136 is glycosylated (N-linked (GlcNAc...) asparagine). 2 consecutive transmembrane segments (helical) span residues 137–157 and 170–190; these read ISVV…FSLT and SLCI…LIVT. N-linked (GlcNAc...) asparagine glycosylation is present at Asn204. The next 4 membrane-spanning stretches (helical) occupy residues 229–249, 266–286, 368–388, and 456–476; these read FKLI…FPGL, VTQT…LLWV, VFYY…MLLH, and LSFF…FGLF.

This sequence belongs to the TMEM161 family.

Its subcellular location is the cell membrane. In terms of biological role, essential for maintaining normal cardiac rhythm in the developing heart and for neonatal survival. Inhibits potassium and calcium currents in the cardiomyocytes, this assists in timely action potential repolarization and thereby maintains normal cardiac rhythm. The chain is Transmembrane protein 161B (tmem161b) from Danio rerio (Zebrafish).